Here is a 236-residue protein sequence, read N- to C-terminus: TVP38/TMEM64 family membrane protein YdjX (236 aa).

5 helical membrane-spanning segments follow: residues 7–27 (FLFA…FGLF), 50–70 (LYIL…ILVI), 72–92 (GGIV…ATLA), 156–176 (IAFW…IVIY), and 192–212 (FILQ…LAKL). Residues 73 to 183 (GIVFGPLLGT…VIYTVMASDL (111 aa)) form a VTT domain region.

This sequence belongs to the TVP38/TMEM64 family.

The protein localises to the cell membrane. In Escherichia coli (strain K12), this protein is TVP38/TMEM64 family membrane protein YdjX (ydjX).